The chain runs to 1168 residues: Pre-mRNA-splicing factor ATP-dependent RNA helicase prp22 (1168 aa).

Disordered stretches follow at residues 77 to 100 (KDDI…HDLD) and 144 to 197 (TLAK…RSSR). Residues 84 to 94 (NVNNGSNSVNG) are compositionally biased toward low complexity. Positions 149 to 173 (RRNDRDSRRDERHYLNGIRERRERS) are enriched in basic and acidic residues. Low complexity predominate over residues 184 to 197 (TSISGQSHSSRSSR). The S1 motif domain occupies 207 to 280 (YGIYSGVVSG…SAKRISLSMK (74 aa)). Residues 287 to 314 (GEDLNPDQVSRSTKKGSGANAIPLSAQN) form a disordered region. The region spanning 520-684 (LEAVSKNQIL…FYKCPIFTIP (165 aa)) is the Helicase ATP-binding domain. 533–540 (GETGSGKT) is a binding site for ATP. Positions 631 to 634 (DEAH) match the DEAH box motif. The region spanning 702–882 (YLDAALMTVM…HTILMLKAMG (181 aa)) is the Helicase C-terminal domain.

This sequence belongs to the DEAD box helicase family. DEAH subfamily. DDX8/PRP22 sub-subfamily. Belongs to the 40S cdc5-associated complex (or cwf complex), a spliceosome sub-complex reminiscent of a late-stage spliceosome composed of the U2, U5 and U6 snRNAs and at least brr2, cdc5, cwf2/prp3, cwf3/syf1, cwf4/syf3, cwf5/ecm2, spp42/cwf6, cwf7/spf27, cwf8, cwf9, cwf10, cwf11, cwf12, prp45/cwf13, cwf14, cwf15, cwf16, cwf17, cwf18, cwf19, cwf20, cwf21, cwf22, cwf23, cwf24, cwf25, cwf26, cyp7/cwf27, cwf28, cwf29/ist3, lea1, msl1, prp5/cwf1, prp10, prp12/sap130, prp17, prp22, sap61, sap62, sap114, sap145, slu7, smb1, smd1, smd3, smf1, smg1 and syf2.

Its subcellular location is the nucleus. It catalyses the reaction ATP + H2O = ADP + phosphate + H(+). Its function is as follows. Acts late in the splicing of pre-mRNA. Required for the splicing of introns with a branch nucleotide to 3'-splice site distance greater or equal to 15. Mediates the release of the spliced mRNA from spliceosomes. This Schizosaccharomyces pombe (strain 972 / ATCC 24843) (Fission yeast) protein is Pre-mRNA-splicing factor ATP-dependent RNA helicase prp22 (prp22).